A 303-amino-acid chain; its full sequence is uncharacterized protein (303 aa).

S63 bears the Phosphoserine mark.

The protein belongs to the HAD-like hydrolase superfamily.

The protein localises to the cytoplasm. It localises to the nucleus. This is an uncharacterized protein from Schizosaccharomyces pombe (strain 972 / ATCC 24843) (Fission yeast).